We begin with the raw amino-acid sequence, 207 residues long: Large ribosomal subunit protein uL4 (207 aa).

The tract at residues 50-75 (KTKTVSEVSGTTKKPFKQKGTGNARQ) is disordered.

The protein belongs to the universal ribosomal protein uL4 family. Part of the 50S ribosomal subunit.

One of the primary rRNA binding proteins, this protein initially binds near the 5'-end of the 23S rRNA. It is important during the early stages of 50S assembly. It makes multiple contacts with different domains of the 23S rRNA in the assembled 50S subunit and ribosome. Its function is as follows. Forms part of the polypeptide exit tunnel. The chain is Large ribosomal subunit protein uL4 from Rickettsia felis (strain ATCC VR-1525 / URRWXCal2) (Rickettsia azadi).